The sequence spans 243 residues: 3-deoxy-manno-octulosonate cytidylyltransferase (243 aa).

The protein belongs to the KdsB family.

It localises to the cytoplasm. The enzyme catalyses 3-deoxy-alpha-D-manno-oct-2-ulosonate + CTP = CMP-3-deoxy-beta-D-manno-octulosonate + diphosphate. The protein operates within nucleotide-sugar biosynthesis; CMP-3-deoxy-D-manno-octulosonate biosynthesis; CMP-3-deoxy-D-manno-octulosonate from 3-deoxy-D-manno-octulosonate and CTP: step 1/1. It functions in the pathway bacterial outer membrane biogenesis; lipopolysaccharide biosynthesis. Functionally, activates KDO (a required 8-carbon sugar) for incorporation into bacterial lipopolysaccharide in Gram-negative bacteria. The polypeptide is 3-deoxy-manno-octulosonate cytidylyltransferase (Bartonella henselae (strain ATCC 49882 / DSM 28221 / CCUG 30454 / Houston 1) (Rochalimaea henselae)).